A 315-amino-acid chain; its full sequence is Alpha- and gamma-adaptin-binding protein p34 (315 aa).

The segment at 197 to 233 is disordered; sequence IGSADPCHPEQPHLPAADRTESLSDHRGGASNTTDAQ. A compositionally biased stretch (basic and acidic residues) spans 203 to 224; the sequence is CHPEQPHLPAADRTESLSDHRG. Phosphoserine is present on residues S310 and S311.

In terms of assembly, associated with AP-1 and AP-2 complexes.

Its subcellular location is the cytoplasm. The protein localises to the cytosol. In terms of biological role, may be involved in endocytic recycling of growth factor receptors such as EGFR. This is Alpha- and gamma-adaptin-binding protein p34 (AAGAB) from Pongo abelii (Sumatran orangutan).